Consider the following 450-residue polypeptide: Glucose-6-phosphate isomerase (450 aa).

The active-site Proton donor is E290. Residues H311 and K425 contribute to the active site.

This sequence belongs to the GPI family.

The protein localises to the cytoplasm. The catalysed reaction is alpha-D-glucose 6-phosphate = beta-D-fructose 6-phosphate. It participates in carbohydrate biosynthesis; gluconeogenesis. Its pathway is carbohydrate degradation; glycolysis; D-glyceraldehyde 3-phosphate and glycerone phosphate from D-glucose: step 2/4. Functionally, catalyzes the reversible isomerization of glucose-6-phosphate to fructose-6-phosphate. The chain is Glucose-6-phosphate isomerase from Alkaliphilus metalliredigens (strain QYMF).